We begin with the raw amino-acid sequence, 76 residues long: Translation initiation factor IF-1 (76 aa).

Residues 1–72 (MAKKDVVVMQ…NKGRIVKREK (72 aa)) enclose the S1-like domain.

Belongs to the IF-1 family. As to quaternary structure, component of the 30S ribosomal translation pre-initiation complex which assembles on the 30S ribosome in the order IF-2 and IF-3, IF-1 and N-formylmethionyl-tRNA(fMet); mRNA recruitment can occur at any time during PIC assembly.

The protein resides in the cytoplasm. One of the essential components for the initiation of protein synthesis. Stabilizes the binding of IF-2 and IF-3 on the 30S subunit to which N-formylmethionyl-tRNA(fMet) subsequently binds. Helps modulate mRNA selection, yielding the 30S pre-initiation complex (PIC). Upon addition of the 50S ribosomal subunit IF-1, IF-2 and IF-3 are released leaving the mature 70S translation initiation complex. This Petrotoga mobilis (strain DSM 10674 / SJ95) protein is Translation initiation factor IF-1.